We begin with the raw amino-acid sequence, 719 residues long: DNA ligase (719 aa).

Residues 42 to 46, 92 to 93, and E126 contribute to the NAD(+) site; these read DAAYD and SL. K128 serves as the catalytic N6-AMP-lysine intermediate. Positions 149, 185, 301, and 325 each coordinate NAD(+). Zn(2+) contacts are provided by C430, C433, C448, and C454. Residues 640–719 enclose the BRCT domain; that stretch reads ATGSPVEGKT…DDWFKLVGED (80 aa).

Belongs to the NAD-dependent DNA ligase family. LigA subfamily. Mg(2+) is required as a cofactor. The cofactor is Mn(2+).

The enzyme catalyses NAD(+) + (deoxyribonucleotide)n-3'-hydroxyl + 5'-phospho-(deoxyribonucleotide)m = (deoxyribonucleotide)n+m + AMP + beta-nicotinamide D-nucleotide.. In terms of biological role, DNA ligase that catalyzes the formation of phosphodiester linkages between 5'-phosphoryl and 3'-hydroxyl groups in double-stranded DNA using NAD as a coenzyme and as the energy source for the reaction. It is essential for DNA replication and repair of damaged DNA. In Brucella ovis (strain ATCC 25840 / 63/290 / NCTC 10512), this protein is DNA ligase.